Consider the following 230-residue polypeptide: Orotidine 5'-phosphate decarboxylase (230 aa).

Substrate contacts are provided by residues Asp-10, Lys-31, 58-67 (DLKLHDIPNT), Thr-117, Arg-179, Gln-188, Gly-208, and Arg-209. Residue Lys-60 is the Proton donor of the active site.

It belongs to the OMP decarboxylase family. Type 1 subfamily. In terms of assembly, homodimer.

It carries out the reaction orotidine 5'-phosphate + H(+) = UMP + CO2. It functions in the pathway pyrimidine metabolism; UMP biosynthesis via de novo pathway; UMP from orotate: step 2/2. Functionally, catalyzes the decarboxylation of orotidine 5'-monophosphate (OMP) to uridine 5'-monophosphate (UMP). In Staphylococcus epidermidis (strain ATCC 35984 / DSM 28319 / BCRC 17069 / CCUG 31568 / BM 3577 / RP62A), this protein is Orotidine 5'-phosphate decarboxylase.